The sequence spans 1012 residues: Cellulose synthase-like protein D5 (1012 aa).

Residues 1–81 (MSVDYANYTV…ARVPAPSSNK (81 aa)) are disordered. Residues 20–37 (PSGGAPPAAPSAGGARPG) are compositionally biased toward low complexity. Over residues 57 to 69 (GGGDDGAKMDRRL) the composition is skewed to basic and acidic residues. 2 helical membrane-spanning segments follow: residues 150 to 170 (ILSP…LFLV) and 180 to 200 (ALWL…SWLL). The active site involves Asp280. The interval 597 to 620 (PRQGSEAMPGAGGGRSGGGSVGGD) is disordered. The span at 606–618 (GAGGGRSGGGSVG) shows a compositional bias: gly residues. Asp717 is an active-site residue. The next 6 membrane-spanning stretches (helical) occupy residues 799–819 (LFLI…QFIV), 825–845 (TFLS…LLEV), 871–891 (LAAV…SFTL), 914–934 (SLFI…VVGV), 948–968 (LLGG…FAKG), and 978–998 (TIVY…WITI).

This sequence belongs to the glycosyltransferase 2 family. Plant cellulose synthase-like D subfamily.

It localises to the golgi apparatus membrane. Its function is as follows. Thought to be a Golgi-localized beta-glycan synthase that polymerize the backbones of noncellulosic polysaccharides (hemicelluloses) of plant cell wall. The chain is Cellulose synthase-like protein D5 (CSLD5) from Oryza sativa subsp. japonica (Rice).